Consider the following 374-residue polypeptide: MKYLLPTAATGLLLLAAQPAVAANTGGYATTDGGETSGAVKKTARSLQEIVDIIEAAKVDSKGKKVKGGAYPLIITYNGNEDSLIKAAEKNICGQWSKDARGVQIKEFTKGITILGTNGSSANFGVWIVNSSDVVVRNMRFGYMPGGAQDGDAIRVDNSPNVWIDHNEIFAKNFECKGTPDNDTTFESAVDIKKGSTNVTVSYNYIHGIKKVGLSGASNTDTGRNLTYHHNIYRDVNSRLPLQRGGLVHAYNNLYDGITGSGFNVRQKGIALIESNWFENALNPVTARNDSSNFGTWELRNNNVTKPADFSKYNITWGRPSTPHVNADDWKNTGKFPSISYKYSPVSAQCVKDKLANYAGVSKNLAVLTAANCK.

A signal peptide spans 1–22 (MKYLLPTAATGLLLLAAQPAVA). A disulfide bridge connects residues C93 and C176. Ca(2+)-binding residues include D150, D152, E187, and D191. R239 is a catalytic residue. C350 and C373 are joined by a disulfide.

It belongs to the polysaccharide lyase 1 family. PLADES subfamily. It depends on Ca(2+) as a cofactor.

Its subcellular location is the secreted. It carries out the reaction Eliminative cleavage of (1-&gt;4)-alpha-D-galacturonan to give oligosaccharides with 4-deoxy-alpha-D-galact-4-enuronosyl groups at their non-reducing ends.. It participates in glycan metabolism; pectin degradation; 2-dehydro-3-deoxy-D-gluconate from pectin: step 2/5. Its function is as follows. Involved in maceration and soft-rotting of plant tissue. The polypeptide is Pectate lyase 2 (pel2) (Pectobacterium atrosepticum (strain SCRI 1043 / ATCC BAA-672) (Erwinia carotovora subsp. atroseptica)).